A 339-amino-acid chain; its full sequence is Dihydroorotate dehydrogenase (quinone) (339 aa).

FMN-binding positions include 64 to 68 and threonine 88; that span reads AGADK. Lysine 68 lines the substrate pocket. 113-117 serves as a coordination point for substrate; it reads NRNGF. Residues asparagine 141 and asparagine 174 each coordinate FMN. Position 174 (asparagine 174) interacts with substrate. Serine 177 functions as the Nucleophile in the catalytic mechanism. Residue asparagine 179 participates in substrate binding. Residues lysine 219 and threonine 247 each coordinate FMN. 248 to 249 contributes to the substrate binding site; it reads NT. Residues glycine 270, glycine 299, and 320–321 contribute to the FMN site; that span reads YS.

Belongs to the dihydroorotate dehydrogenase family. Type 2 subfamily. Monomer. Requires FMN as cofactor.

The protein localises to the cell membrane. It catalyses the reaction (S)-dihydroorotate + a quinone = orotate + a quinol. The protein operates within pyrimidine metabolism; UMP biosynthesis via de novo pathway; orotate from (S)-dihydroorotate (quinone route): step 1/1. In terms of biological role, catalyzes the conversion of dihydroorotate to orotate with quinone as electron acceptor. This chain is Dihydroorotate dehydrogenase (quinone), found in Haemophilus influenzae (strain PittGG).